Here is a 420-residue protein sequence, read N- to C-terminus: Histidine--tRNA ligase (420 aa).

This sequence belongs to the class-II aminoacyl-tRNA synthetase family. Homodimer.

Its subcellular location is the cytoplasm. It catalyses the reaction tRNA(His) + L-histidine + ATP = L-histidyl-tRNA(His) + AMP + diphosphate + H(+). The polypeptide is Histidine--tRNA ligase (Mycobacterium marinum (strain ATCC BAA-535 / M)).